A 680-amino-acid chain; its full sequence is Epithelial splicing regulatory protein 1 (680 aa).

RRM domains are found at residues 224 to 301 (TVVR…KATG), 325 to 405 (VIVR…RSTA), and 444 to 524 (DCIR…QCSA). Ser542 carries the phosphoserine modification. At Arg581 the chain carries Omega-N-methylarginine.

It belongs to the ESRP family. In terms of tissue distribution, epithelial cell-specific. Epithelial-specific expression in diverse tissues and organs with particularly notable levels of expression in skin and gastrointestinal epithelia.

It is found in the nucleus. In terms of biological role, mRNA splicing factor that regulates the formation of epithelial cell-specific isoforms. Specifically regulates the expression of FGFR2-IIIb, an epithelial cell-specific isoform of FGFR2. Also regulates the splicing of CD44, CTNND1, ENAH, 3 transcripts that undergo changes in splicing during the epithelial-to-mesenchymal transition (EMT). Acts by directly binding specific sequences in mRNAs. Binds the GU-rich sequence motifs in the ISE/ISS-3, a cis-element regulatory region present in the mRNA of FGFR2. Regulates splicing and expression of genes involved in inner ear development, auditory hair cell differentiation, and cell fate specification in the cochlear epithelium. This chain is Epithelial splicing regulatory protein 1 (Esrp1), found in Mus musculus (Mouse).